The chain runs to 493 residues: Protein kinase PINOID 2 (493 aa).

Residues 1–53 (MAAIKEESDYDSSRSSLTAPDSRRSWISDIGSSSSVSARSFGGDTPASSCRYK) are disordered. A compositionally biased stretch (low complexity) spans 27–44 (ISDIGSSSSVSARSFGGD). In terms of domain architecture, Protein kinase spans 80–443 (FRLVRRLGSG…SAEVKRHPFF (364 aa)). Residues 86 to 94 (LGSGDLGNV) and lysine 120 contribute to the ATP site. Aspartate 216 serves as the catalytic Proton acceptor. Residues 295-306 (GGGAAAGNNGDG) show a composition bias toward gly residues. 2 disordered regions span residues 295–320 (GGGA…TAEP) and 458–493 (EVPA…FDYF). Positions 307-319 (DGNDEEAETETAE) are enriched in acidic residues. Residues 444–493 (KGVNWALVRSVRPPEVPAPPAPAPKKVMTMSKKERQEPYNYRPENHFDYF) enclose the AGC-kinase C-terminal domain. Residues 474 to 493 (SKKERQEPYNYRPENHFDYF) show a composition bias toward basic and acidic residues.

It belongs to the protein kinase superfamily. Ser/Thr protein kinase family.

It carries out the reaction L-seryl-[protein] + ATP = O-phospho-L-seryl-[protein] + ADP + H(+). It catalyses the reaction L-threonyl-[protein] + ATP = O-phospho-L-threonyl-[protein] + ADP + H(+). Functionally, serine/threonine-protein kinase involved in the regulation of auxin signaling. The polypeptide is Protein kinase PINOID 2 (PID2) (Oryza sativa subsp. japonica (Rice)).